The chain runs to 310 residues: Glycerol-3-phosphate dehydrogenase [NAD(P)+] (310 aa).

Residues Trp-19, Arg-39, Arg-40, and Lys-87 each coordinate NADPH. Sn-glycerol 3-phosphate contacts are provided by Lys-87 and Gly-115. Residue Ser-119 participates in NADPH binding. 5 residues coordinate sn-glycerol 3-phosphate: Lys-170, Asp-223, Ser-233, Arg-234, and Asn-235. Catalysis depends on Lys-170, which acts as the Proton acceptor. Residue Arg-234 participates in NADPH binding. Residue Glu-260 coordinates NADPH.

The protein belongs to the NAD-dependent glycerol-3-phosphate dehydrogenase family.

The protein localises to the cytoplasm. It catalyses the reaction sn-glycerol 3-phosphate + NAD(+) = dihydroxyacetone phosphate + NADH + H(+). The enzyme catalyses sn-glycerol 3-phosphate + NADP(+) = dihydroxyacetone phosphate + NADPH + H(+). It participates in membrane lipid metabolism; glycerophospholipid metabolism. In terms of biological role, catalyzes the reduction of the glycolytic intermediate dihydroxyacetone phosphate (DHAP) to sn-glycerol 3-phosphate (G3P), the key precursor for phospholipid synthesis. The chain is Glycerol-3-phosphate dehydrogenase [NAD(P)+] from Synechococcus sp. (strain JA-3-3Ab) (Cyanobacteria bacterium Yellowstone A-Prime).